The sequence spans 444 residues: MTRGLYIESYGCQMNVYDALMMEDLLRPVGYAAVSRPEDADIILINTCHIREKASEKLYSTLGRMRVIKKEECILIVAGCVAQAEGEAVFERAPYVNVVVGPQGLHTLPELIMKVKRDKKQINIEFPVVSKFDAISIDRKANGGVSAYVSIQEGCDKFCTFCVVPYTRGPEYSRDVEAILEEVKQLTDRGTKEIVLIGQNVNAYHGTYKGNEWDLGKLIQKVSLIDGVERIRYTTSHPRDMHPSLYEAHRDEKKLAPFVHLPVQSGSDAILRKMNRKHTAEEYLRVVEQLKDSNKNMALSSDFIVGFPGETEKDFEETMKLVESVGFALSYSFKYSPRPGTPGAEYSNQVPEEEKSARLAALQGLLTKQQLQFNKSMEGRVMDVLVGDPSSMRSDRIFGKSEYTQSIHISAPSGSEDCFNRMVRVEILHGRQNSLEGTVLSNAN.

The MTTase N-terminal domain maps to 3–117 (RGLYIESYGC…LPELIMKVKR (115 aa)). [4Fe-4S] cluster contacts are provided by Cys-12, Cys-48, Cys-80, Cys-155, Cys-159, and Cys-162. Residues 141-374 (ANGGVSAYVS…LLTKQQLQFN (234 aa)) enclose the Radical SAM core domain. The 67-residue stretch at 375-441 (KSMEGRVMDV…QNSLEGTVLS (67 aa)) folds into the TRAM domain.

This sequence belongs to the methylthiotransferase family. MiaB subfamily. Monomer. The cofactor is [4Fe-4S] cluster.

It localises to the cytoplasm. The catalysed reaction is N(6)-dimethylallyladenosine(37) in tRNA + (sulfur carrier)-SH + AH2 + 2 S-adenosyl-L-methionine = 2-methylsulfanyl-N(6)-dimethylallyladenosine(37) in tRNA + (sulfur carrier)-H + 5'-deoxyadenosine + L-methionine + A + S-adenosyl-L-homocysteine + 2 H(+). Its function is as follows. Catalyzes the methylthiolation of N6-(dimethylallyl)adenosine (i(6)A), leading to the formation of 2-methylthio-N6-(dimethylallyl)adenosine (ms(2)i(6)A) at position 37 in tRNAs that read codons beginning with uridine. The sequence is that of tRNA-2-methylthio-N(6)-dimethylallyladenosine synthase from Anaplasma phagocytophilum (strain HZ).